A 260-amino-acid polypeptide reads, in one-letter code: Intermembrane phospholipid transport system permease protein MlaE (260 aa).

At 1–50 the chain is on the cytoplasmic side; that stretch reads MLLNALASLGHKGIKTLRTFGRAGLMLFNALVGKPEFRKHAPLLVRQLYN. The chain crosses the membrane as a helical span at residues 51–71; sequence VGVLSMLIIVVSGVFIGMVLG. Over 72–88 the chain is Periplasmic; the sequence is LQGYLVLTTYSAETSLG. A helical transmembrane segment spans residues 89 to 109; the sequence is MLVALSLLRELGPVVAALLFA. At 110–147 the chain is on the cytoplasmic side; the sequence is GRAGSALTAEIGLMRATEQLSSMEMMAVDPLRRVISPR. A helical membrane pass occupies residues 148-168; it reads FWAGVISLPLLTVIFVAVGIW. The Periplasmic portion of the chain corresponds to 169-198; sequence GGSLVGVSWKGIDSGFFWSAMQNAVDWRMD. The chain crosses the membrane as a helical span at residues 199 to 219; the sequence is LVNCLIKSVVFAITVTWISLF. At 220 to 238 the chain is on the cytoplasmic side; it reads NGYDAIPTSAGISRATTRT. The helical transmembrane segment at 239–259 threads the bilayer; it reads VVHSSLAVLGLDFVLTALMFG. A topological domain (periplasmic) is located at residue Asn-260.

This sequence belongs to the MlaE permease family. In terms of assembly, the complex is composed of two ATP-binding proteins (MlaF), two transmembrane proteins (MlaE), two cytoplasmic solute-binding proteins (MlaB) and six periplasmic solute-binding proteins (MlaD).

It is found in the cell inner membrane. Functionally, part of the ABC transporter complex MlaFEDB, which is involved in a phospholipid transport pathway that maintains lipid asymmetry in the outer membrane by retrograde trafficking of phospholipids from the outer membrane to the inner membrane. Probably responsible for the translocation of the substrate across the membrane. The chain is Intermembrane phospholipid transport system permease protein MlaE from Escherichia coli O157:H7.